Consider the following 67-residue polypeptide: Large ribosomal subunit protein bL35 (67 aa).

The protein belongs to the bacterial ribosomal protein bL35 family.

In Mesorhizobium japonicum (strain LMG 29417 / CECT 9101 / MAFF 303099) (Mesorhizobium loti (strain MAFF 303099)), this protein is Large ribosomal subunit protein bL35.